Consider the following 638-residue polypeptide: Threonine--tRNA ligase (638 aa).

The region spanning 1 to 61 (MPNITLPDGS…EADTPLAIVT (61 aa)) is the TGS domain. Residues 242 to 533 (DHRKLGRLLD…LIEHYAGALP (292 aa)) form a catalytic region. Zn(2+)-binding residues include C333, H384, and H510.

Belongs to the class-II aminoacyl-tRNA synthetase family. As to quaternary structure, homodimer. It depends on Zn(2+) as a cofactor.

The protein resides in the cytoplasm. It catalyses the reaction tRNA(Thr) + L-threonine + ATP = L-threonyl-tRNA(Thr) + AMP + diphosphate + H(+). Catalyzes the attachment of threonine to tRNA(Thr) in a two-step reaction: L-threonine is first activated by ATP to form Thr-AMP and then transferred to the acceptor end of tRNA(Thr). Also edits incorrectly charged L-seryl-tRNA(Thr). This is Threonine--tRNA ligase from Aromatoleum aromaticum (strain DSM 19018 / LMG 30748 / EbN1) (Azoarcus sp. (strain EbN1)).